Consider the following 2713-residue polypeptide: Histone-lysine N-methyltransferase 2B (2713 aa).

Gly residues predominate over residues 1–11 (MAAAAGGGSCP). Disordered regions lie at residues 1–65 (MAAA…GEDT), 82–524 (RLWA…PTVV), and 542–783 (VSAR…ARVA). An N-acetylalanine modification is found at alanine 2. Residues 12-24 (GPGSARGRFPGRP) show a composition bias toward low complexity. The short motif at 17 to 36 (RGRFPGRPRGSGGGGGRGGR) is the Menin-binding motif (MBM) element. 2 stretches are compositionally biased toward gly residues: residues 25-38 (RGSG…GRGN) and 49-60 (RGGGAAGPGGAE). The segment at residues 37 to 44 (GNGAERVR) is a DNA-binding region (a.T hook 1). A compositionally biased stretch (acidic residues) spans 109-123 (PEEESSDGESEEEEF). Positions 110-117 (EEESSDGE) form a DNA-binding region, a.T hook 2. A phosphoserine mark is found at serine 113, serine 114, and serine 118. The span at 144–158 (QRGRAPRGRGRKHKT) shows a compositional bias: basic residues. Positions 340–360 (PQRKDGDEPERGSCRKKQEQK) are enriched in basic and acidic residues. Positions 357–365 (QEQKLEEEE) form a DNA-binding region, a.T hook 3. The segment covering 361–393 (LEEEEEEEEKEGEEKEEKDDNEDNNKQEEEEET) has biased composition (acidic residues). A compositionally biased stretch (basic and acidic residues) spans 394-412 (ERAVAEEEAMLAKEKEEAK). Residues 414–460 (PSPPLTPPVPSPPPPLPPPSTSPPPPASPLPPPVSPPPPLSPPPYPA) show a composition bias toward pro residues. The segment covering 501–517 (GTLSPTPNPSTTTGSPL) has biased composition (low complexity). Residues 555-566 (RFMDEDPPKPPK) are compositionally biased toward basic and acidic residues. Residues 577–605 (ATSPPAPQEPVPVSSPPRVPTPPSTPVPL) are compositionally biased toward pro residues. Residues 606 to 617 (PEKRRSILREPT) show a composition bias toward basic and acidic residues. Positions 627–645 (LPPPPPAPPPAPSPPPAPA) are enriched in pro residues. 3 stretches are compositionally biased toward low complexity: residues 646–657 (TPSRRPLLLRAP), 715–728 (VPVV…EVPP), and 738–756 (QQLQ…LLPQ). Positions 757–774 (ALPPQQPQAQPPPSPQHT) are enriched in pro residues. A Glycyl lysine isopeptide (Lys-Gly) (interchain with G-Cter in SUMO2) cross-link involves residue lysine 810. Phosphoserine is present on residues serine 826, serine 849, and serine 866. 2 disordered regions span residues 831–872 (TEEA…QGPR) and 899–964 (SALP…HHGK). Residues 841–862 (TPDRGCVRSEDESMEAKRDRAS) show a composition bias toward basic and acidic residues. Residues 912-922 (EDTSSASETES) show a composition bias toward low complexity. Phosphoserine is present on serine 941. Over residues 953 to 964 (TPRRSLPSHHGK) the composition is skewed to basic residues. The CXXC-type zinc finger occupies 964–1011 (KKMRMARCGHCRGCLRVQDCGSCVNCLDKPKFGGPNTKKQCCVYRKCD). Residues cysteine 971, cysteine 974, cysteine 977, cysteine 983, cysteine 986, cysteine 989, cysteine 1005, and cysteine 1010 each coordinate Zn(2+). 2 disordered regions span residues 1032–1076 (LLPW…DSLL) and 1088–1138 (QRPS…LQPV). A phosphoserine mark is found at serine 1037, serine 1040, serine 1098, and serine 1101. Lysine 1142 participates in a covalent cross-link: Glycyl lysine isopeptide (Lys-Gly) (interchain with G-Cter in SUMO2). PHD-type zinc fingers lie at residues 1207 to 1258 (PMVC…CKFC), 1255 to 1309 (CKFC…CVRC), and 1341 to 1402 (GNYC…CAGA). Positions 1410-1510 (ALSGALQGGL…GLLLKLLESA (101 aa)) constitute a Bromo domain. The disordered stretch occupies residues 1550 to 1572 (RQQESETPESGQPPGDPSAAFQS). Residues 1584 to 1624 (PRQCALCLKYGDADSKEAGRLLYIGQNEWTHVNCAIWSAEV) form a C2HC pre-PHD-type zinc finger. The segment at 1645–1692 (MRCELCLKPGATVGCCLSSCLSNFHFMCARASYCIFQDDKKVFCQKHT) adopts a PHD-type 4 zinc-finger fold. The region spanning 1733 to 1789 (VINVLIGSIRINSLGTLSDLSDCEGRLFPIGYQCSRLYWSTVDARRRCWYRCRILEY) is the FYR N-terminal domain. The span at 1808–1821 (QTIVHSPTPSSDTD) shows a compositional bias: polar residues. 5 disordered regions span residues 1808-1973 (QTIV…GPDF), 2056-2104 (QLDG…PPED), 2116-2160 (NLGG…RTFA), 2279-2356 (VSTF…RCPL), and 2382-2408 (YSAG…PKRV). 2 stretches are compositionally biased toward low complexity: residues 1872 to 1890 (PLGG…PSSL) and 1923 to 1933 (RRTSSPLRTSP). Residues serine 1926 and serine 1932 each carry the phosphoserine modification. Polar residues predominate over residues 1939-1950 (LSTSVTALTPTS). Over residues 2058 to 2068 (DGVDDGTDSEA) the composition is skewed to acidic residues. Phosphothreonine is present on residues threonine 2064 and threonine 2079. Residues 2084–2093 (PGVGRGGVLG) are compositionally biased toward gly residues. The span at 2140 to 2153 (NGSQPPQSLSTSPA) shows a compositional bias: polar residues. Serine 2286 and serine 2346 each carry phosphoserine. The FYR C-terminal domain maps to 2409 to 2490 (GPHLRFEISS…QRCQHYKFRY (82 aa)). Residues 2506–2511 (GAARAE) carry the WDR5 interaction motif (WIN) motif. Residues 2573–2689 (EAVGVYRSAI…RGEELTYDYK (117 aa)) form the SET domain. S-adenosyl-L-methionine-binding positions include histidine 2583, arginine 2585, tyrosine 2627, and 2650–2651 (NH). Residues cysteine 2653 and cysteine 2701 each contribute to the Zn(2+) site. In terms of domain architecture, Post-SET spans 2697–2713 (NKLPCNCGAKRCRRFLN). Residue asparagine 2702 participates in S-adenosyl-L-methionine binding. The Zn(2+) site is built by cysteine 2703 and cysteine 2708.

The protein belongs to the class V-like SAM-binding methyltransferase superfamily. Histone-lysine methyltransferase family. TRX/MLL subfamily. In terms of assembly, component of the menin-associated histone methyltransferase complex, at least composed of KMT2B/MLL4, ASH2L, RBBP5, WDR5, DPY30, MEN1; the complex interacts with POLR2A and POLR2B via MEN1. Interacts with NFE2. Interacts with KDM6B. Interacts (via WIN motif) with WDR5. Interacts (via MBM motif) with MEN1.

It localises to the nucleus. The enzyme catalyses L-lysyl(4)-[histone H3] + S-adenosyl-L-methionine = N(6)-methyl-L-lysyl(4)-[histone H3] + S-adenosyl-L-homocysteine + H(+). It catalyses the reaction N(6)-methyl-L-lysyl(4)-[histone H3] + S-adenosyl-L-methionine = N(6),N(6)-dimethyl-L-lysyl(4)-[histone H3] + S-adenosyl-L-homocysteine + H(+). Histone methyltransferase that catalyzes methyl group transfer from S-adenosyl-L-methionine to the epsilon-amino group of 'Lys-4' of histone H3 (H3K4) via a non-processive mechanism. Part of chromatin remodeling machinery predominantly forms H3K4me1 and H3K4me2 methylation marks at active chromatin sites where transcription and DNA repair take place. Likely plays a redundant role with KMT2C in enriching H3K4me1 marks on primed and active enhancer elements. Plays a central role in beta-globin locus transcription regulation by being recruited by NFE2. Plays an important role in controlling bulk H3K4me during oocyte growth and preimplantation development. Required during the transcriptionally active period of oocyte growth for the establishment and/or maintenance of bulk H3K4 trimethylation (H3K4me3), global transcriptional silencing that preceeds resumption of meiosis, oocyte survival and normal zygotic genome activation. This Mus musculus (Mouse) protein is Histone-lysine N-methyltransferase 2B (Kmt2b).